A 95-amino-acid polypeptide reads, in one-letter code: Toxin HigB-1 (95 aa).

Its function is as follows. Toxic component of a type II toxin-antitoxin (TA) system. Inhibits translation by cleavage of mRNA. The polypeptide is Toxin HigB-1 (higB-1) (Vibrio cholerae serotype O1 (strain ATCC 39315 / El Tor Inaba N16961)).